The chain runs to 317 residues: Melanocyte-stimulating hormone receptor (317 aa).

Residues 1-37 (MPVQGSQRRLLGSLNSTPTATPKLGLAANQTGAWCLE) lie on the Extracellular side of the membrane. N29 carries N-linked (GlcNAc...) asparagine glycosylation. Residues 38–63 (VSIPDGLFLSLGLVSLVENVLVVAAI) traverse the membrane as a helical segment. Residues 64–72 (AKNRNLHSP) lie on the Cytoplasmic side of the membrane. Residues 73 to 93 (MYCFICCLALSDLLVSGSNML) form a helical membrane-spanning segment. At 94-118 (ETAVILLLEAGALAARAAVVQQLDN) the chain is on the extracellular side. The helical transmembrane segment at 119 to 140 (VIDVITCSSMLSSLCFLGAIAV) threads the bilayer. The Cytoplasmic segment spans residues 141-163 (DRYISIFYALRYHSIVTLPRAQR). A helical membrane pass occupies residues 164–183 (VVAAIWVASVLFSTLFIAYY). The Extracellular portion of the chain corresponds to 184-191 (DHAAVLLC). Residues 192–211 (LVVFFLAMLVLMAVLYVHML) form a helical membrane-spanning segment. Topologically, residues 212 to 240 (ARACQHAQGIAQLHKRQRPAHQGFGLKGA) are cytoplasmic. A helical transmembrane segment spans residues 241–266 (ATLTILLGIFFLCWGPFFLHLTLIVL). Residues 267-279 (CPQHPTCSCIFKN) are Extracellular-facing. A helical membrane pass occupies residues 280-300 (FNLFLALIICNAIIDPLIYAF). Over 301-317 (RSQELRRTLKEVLLCSW) the chain is Cytoplasmic. C315 is lipidated: S-palmitoyl cysteine.

This sequence belongs to the G-protein coupled receptor 1 family. Interacts with MGRN1, but does not undergo MGRN1-mediated ubiquitination; this interaction competes with GNAS-binding and thus inhibits agonist-induced cAMP production. Interacts with OPN3; the interaction results in a decrease in MC1R-mediated cAMP signaling and ultimately a decrease in melanin production in melanocytes.

The protein localises to the cell membrane. Functionally, receptor for MSH (alpha, beta and gamma) and ACTH. The activity of this receptor is mediated by G proteins which activate adenylate cyclase. Mediates melanogenesis, the production of eumelanin (black/brown) and phaeomelanin (red/yellow), via regulation of cAMP signaling in melanocytes. In Colobus guereza (Mantled guereza), this protein is Melanocyte-stimulating hormone receptor (MC1R).